Reading from the N-terminus, the 21-residue chain is GLLGSIGNAIGAFIANKLKPK.

As to expression, expressed by the skin dorsal glands.

The protein localises to the secreted. Has no antimicrobial activity. Strongly inhibits the formation of NO by neuronal nitric oxide synthase at micromolar concentrations. This Ranoidea dahlii (Dahl's aquatic frog) protein is Dahlein-5.2.